A 112-amino-acid chain; its full sequence is Nucleoid-associated protein RER_03900 (112 aa).

The protein belongs to the YbaB/EbfC family. As to quaternary structure, homodimer.

It localises to the cytoplasm. Its subcellular location is the nucleoid. In terms of biological role, binds to DNA and alters its conformation. May be involved in regulation of gene expression, nucleoid organization and DNA protection. This is Nucleoid-associated protein RER_03900 from Rhodococcus erythropolis (strain PR4 / NBRC 100887).